A 142-amino-acid polypeptide reads, in one-letter code: Large ribosomal subunit protein bL17 (142 aa).

It belongs to the bacterial ribosomal protein bL17 family. In terms of assembly, part of the 50S ribosomal subunit. Contacts protein L32.

This is Large ribosomal subunit protein bL17 from Chlamydia pneumoniae (Chlamydophila pneumoniae).